A 632-amino-acid chain; its full sequence is PWWP domain-containing protein 5 (632 aa).

Residues 97–158 form the PWWP domain; the sequence is DSDLVWAKLR…ASQIKPFHQN (62 aa). The disordered stretch occupies residues 310 to 452; it reads RKTDYKDNAE…AERKISSPDE (143 aa). Composition is skewed to basic and acidic residues over residues 313–326, 339–364, 371–383, and 425–449; these read DYKDNAEQTKEKTL, STEKLDGKSHSEKKRKVESSESGKSE, QQKEDSVSKHSNE, and KSTEVENEKTKKPRHQELAERKISS. Residues 352 to 359 carry the Nuclear localization signal motif; it reads KRKVESSE.

It belongs to the PDP family. In terms of assembly, component of the PRC2 (polycomb repressive complex 2) complex which regulates histone methylation on histone H3K27.

Its subcellular location is the nucleus. May influence gene expression by regulating the function of the PRC2 complex and modulating H3K27me3 level. This is PWWP domain-containing protein 5 from Arabidopsis thaliana (Mouse-ear cress).